The following is a 106-amino-acid chain: UPF0145 protein Tlet_1264 (106 aa).

It belongs to the UPF0145 family.

This chain is UPF0145 protein Tlet_1264, found in Pseudothermotoga lettingae (strain ATCC BAA-301 / DSM 14385 / NBRC 107922 / TMO) (Thermotoga lettingae).